Reading from the N-terminus, the 1217-residue chain is ATP-dependent helicase/nuclease subunit A (1217 aa).

Residues 10–475 (VIWTDAQWQS…MDLSQNFRSR (466 aa)) form the UvrD-like helicase ATP-binding domain. 31–38 (AAAGSGKT) contributes to the ATP binding site. The region spanning 491–786 (DEQVGEVNYD…RMMTIHSSKG (296 aa)) is the UvrD-like helicase C-terminal domain.

Belongs to the helicase family. AddA subfamily. In terms of assembly, heterodimer of AddA and AddB/RexB. Mg(2+) is required as a cofactor.

The enzyme catalyses Couples ATP hydrolysis with the unwinding of duplex DNA by translocating in the 3'-5' direction.. It carries out the reaction ATP + H2O = ADP + phosphate + H(+). The heterodimer acts as both an ATP-dependent DNA helicase and an ATP-dependent, dual-direction single-stranded exonuclease. Recognizes the chi site generating a DNA molecule suitable for the initiation of homologous recombination. The AddA nuclease domain is required for chi fragment generation; this subunit has the helicase and 3' -&gt; 5' nuclease activities. The sequence is that of ATP-dependent helicase/nuclease subunit A from Staphylococcus aureus (strain bovine RF122 / ET3-1).